The chain runs to 1077 residues: MALLNDVTSVAECNRQTTMTDEHKSNINSNSSHSSNNNNNGSSSNNDNNSNDDAASSSNSKNNNTSNESSHSNNNTSSIIAEAAAKFLLKNGLNGSSSTSYPPLPPPLPANLSRTTTPTTTTTPSSSSSTASNGFLPHAKTPKSSSIMAASAAVAASVVGATASKPTIDVLGGVLDYSSLGGAATGSLPTTAVVAAAAGTAKIGKGSNSGGSFDMGRTPISTHGNNSWGGYGGRLQFFKDGKFILELARSKDGDKSGWVSVTRKTFRPPSAATSATVTPTSAVTTAYPKNENSTSLSFSDDNSSIQSSPWQRDQPWKQSRPRRGISKELSLFFHRPRNSTLGRAALRTAARKRRRPHEPLTTSEDQQPIFATAIKAENGDDTLKAEAAEAVEIENVAVADTTTNEIKIEKPDTIKGEDDAERLEKEPKKAVSDDSESKEASPGQQVEPQPKDETVDVEMKMNTSEDEEPMTELPRITNAVNGDLNGDLKASIGKPKSKPKPKAKLSSIIQKLIDSVPARLEQMSKTSAVIASTTTSSDRIGGGLSHALTHKVSPPSSATAAGRLVEYHTQHVSPRKRILREFEKVSLEDNGCVNNGSGGASSGGAGGKRSRAKGTSTSSPAGKASPMNLAPPQGKPSPSPGSSSSSTSPATLSTQPTRLNSSYSIHSLLGGSSGSGSSSFSSSGKKCGDHPAAIISNVHHPQHSMYQPSSSSYPRALLTSPKSPDVSGSNGGGGKSPSHTGTKKRSPPYSAGSPVDYGHSFYRDPYAGAGRPSTSGSASQDLSPPRSSPASPATTPRTVPKKTASIRREFASPSASSSSCPSPGDRSASPPERRHMQQQPHLQRSSPLHYYMYPPPPQVNGNGSAGSPTSAPPTSNSSAAAVAAAAAAAAAYIPSPSIYNPYISTLAALRHNPLWMHHYQTGASPLLSPHPQPGGSAAAAAAAAAARLSPQSAYHAFAYNGVGAAVAAAAAAAAFGQPAPSPHTHPHLAHPHQHPHPAALTTHHSPAHLATPKLTDSSTDQMSATSSHRTASTSPSSSSASASSSAATSGASSSAMFHTSSLRNEQSSDLPLNLSKH.

Disordered stretches follow at residues 14–75 (NRQT…SNNN), 97–141 (SSTS…HAKT), 269–322 (PSAA…SRPR), 340–368 (TLGR…DQQP), 408–504 (IEKP…PKAK), 533–876 (TTTS…PTSN), and 976–1077 (GQPA…LSKH). Low complexity-rich tracts occupy residues 26 to 75 (NINS…SNNN), 115 to 130 (TTTP…SSST), 269 to 286 (PSAA…VTTA), and 293 to 308 (STSL…IQSS). Basic and acidic residues-rich tracts occupy residues 408-439 (IEKP…ESKE) and 449-459 (QPKDETVDVEM). A compositionally biased stretch (gly residues) spans 596-607 (GSGGASSGGAGG). Positions 640 to 684 (PGSSSSSTSPATLSTQPTRLNSSYSIHSLLGGSSGSGSSSFSSSG) are enriched in low complexity. Positions 704 to 713 (SMYQPSSSSY) are enriched in polar residues. Phosphoserine occurs at positions 720, 723, 746, and 753. Positions 772 to 782 (PSTSGSASQDL) are enriched in polar residues. Composition is skewed to low complexity over residues 783–798 (SPPR…TPRT) and 811–829 (ASPS…RSAS). Residues 837-846 (QQQPHLQRSS) are compositionally biased toward polar residues. Over residues 865–876 (AGSPTSAPPTSN) the composition is skewed to low complexity. Basic residues predominate over residues 984 to 995 (THPHLAHPHQHP). Composition is skewed to low complexity over residues 996–1012 (HPAA…LATP) and 1023–1055 (SATS…SSSA). A compositionally biased stretch (polar residues) spans 1056-1070 (MFHTSSLRNEQSSDL).

During embryogenesis expression is primarily in endo- and mesodermal cell layers. Ovary, embryos, larval and pupal imaginal disks.

The protein resides in the nucleus. Its function is as follows. Is a potent antagonist of neurogenic gene activity during sensory organ development. The expression of distinct cell fates by the trichogen (shaft) / tormogen (socket) sister cell pair depends on the level of H activity. A certain threshold level of H activity is required, below which both sister cells adopt the tormogen fate. This Drosophila melanogaster (Fruit fly) protein is Protein hairless (H).